A 217-amino-acid chain; its full sequence is NADPH-dependent 3-demethoxyubiquinone 3-hydroxylase, mitochondrial (217 aa).

The transit peptide at 1 to 35 (MSCAGAAAAPRLWRLRPGARRSLSAYGRRTSVRFR) directs the protein to the mitochondrion. The interval 11–29 (RLWRLRPGARRSLSAYGRR) is required for nuclear localization. 2 repeat units span residues 48–129 (AVDR…TALL) and 130–217 (GKEG…SERL). The tract at residues 48–217 (AVDRIIRVDH…RVAIYLSERL (170 aa)) is 2 X approximate tandem repeats. Residue arginine 51 coordinates NADH. Glutamate 60, glutamate 90, histidine 93, glutamate 142, glutamate 178, and histidine 181 together coordinate Fe cation. Residues tyrosine 212 and arginine 216 each coordinate NADH.

It belongs to the COQ7 family. In terms of assembly, component of a multi-subunit COQ enzyme complex. Interacts with COQ8B and COQ6. Interacts with COQ9. The cofactor is Fe cation. Expressed dominantly in heart and skeletal muscle.

Its subcellular location is the mitochondrion inner membrane. It localises to the mitochondrion. It is found in the nucleus. The protein localises to the chromosome. The enzyme catalyses a 5-methoxy-2-methyl-3-(all-trans-polyprenyl)benzoquinone + NADH + O2 = a 3-demethylubiquinone + NAD(+) + H2O. It functions in the pathway cofactor biosynthesis; ubiquinone biosynthesis. In terms of biological role, catalyzes the hydroxylation of the 5-methoxy-2-methyl-3-(all-trans-polyprenyl)benzoquinone at the C6 position and participates in the biosynthesis of ubiquinone. Catalyzes the reaction through a substrate-mediated reduction pathway, whereby NADH shuttles electrons to 5-methoxy-2-methyl-3-(all-trans-decaprenyl)benzoquinone, which then transfers the electrons to the two Fe(3+) centers. The binding of 5-methoxy-2-methyl-3-(all-trans-polyprenyl)benzoquinone (DMQn) mediates reduction of the diiron center by nicotinamide adenine dinucleotide (NADH) and initiates oxygen activation for subsequent DMQ hydroxylation. The physiological substrates are 5-methoxy-2-methyl-3-(all-trans-nonaprenyl)benzoquinone (DMQ(9)) and 5-methoxy-2-methyl-3-(all-trans-decaprenyl)benzoquinone (DMQ(10)), however in vitro the enzyme does not have any specificity concerning the length of the polyprenyl tail, and accepts tails of various lengths with similar efficiency. Also has a structural role in the COQ enzyme complex, stabilizing other COQ polypeptides. Involved in lifespan determination in a ubiquinone-independent manner. Plays a role in modulating mitochondrial stress responses, acting in the nucleus, perhaps via regulating gene expression, independent of its characterized mitochondrial function in ubiquinone biosynthesis. This chain is NADPH-dependent 3-demethoxyubiquinone 3-hydroxylase, mitochondrial, found in Homo sapiens (Human).